A 1045-amino-acid polypeptide reads, in one-letter code: Probable beta-glucosidase E (1045 aa).

Residues 1–74 (MAPPDSTHGG…SGSYQLRPVD (74 aa)) form a disordered region. Topologically, residues 1–163 (MAPPDSTHGG…PVKYARIWWR (163 aa)) are cytoplasmic. Residues 11-20 (SFRDHLKTND) are compositionally biased toward basic and acidic residues. Residues 164-184 (TLLAVIVTLAVVVWGFLSFAV) form a helical; Signal-anchor for type II membrane protein membrane-spanning segment. Residues 185–1045 (SHREEPKVWP…SRDLPLMGEY (861 aa)) are Extracellular-facing. Asparagine 226, asparagine 234, and asparagine 402 each carry an N-linked (GlcNAc...) asparagine glycan. Aspartate 430 is an active-site residue. N-linked (GlcNAc...) asparagine glycans are attached at residues asparagine 473, asparagine 512, asparagine 577, asparagine 893, asparagine 902, and asparagine 988.

It belongs to the glycosyl hydrolase 3 family.

The protein localises to the cell membrane. It catalyses the reaction Hydrolysis of terminal, non-reducing beta-D-glucosyl residues with release of beta-D-glucose.. The protein operates within glycan metabolism; cellulose degradation. Functionally, beta-glucosidases are one of a number of cellulolytic enzymes involved in the degradation of cellulosic biomass. Catalyzes the last step releasing glucose from the inhibitory cellobiose. The polypeptide is Probable beta-glucosidase E (bglE) (Neosartorya fischeri (strain ATCC 1020 / DSM 3700 / CBS 544.65 / FGSC A1164 / JCM 1740 / NRRL 181 / WB 181) (Aspergillus fischerianus)).